Reading from the N-terminus, the 377-residue chain is Glutamate 5-kinase (377 aa).

Lys18 is an ATP binding site. Positions 55, 142, and 154 each coordinate substrate. ATP contacts are provided by residues 174-175 (SD) and 216-222 (TGGMKSK). The 79-residue stretch at 281–359 (QGEVVVDAGA…REIEALLGYK (79 aa)) folds into the PUA domain.

The protein belongs to the glutamate 5-kinase family.

Its subcellular location is the cytoplasm. The catalysed reaction is L-glutamate + ATP = L-glutamyl 5-phosphate + ADP. The protein operates within amino-acid biosynthesis; L-proline biosynthesis; L-glutamate 5-semialdehyde from L-glutamate: step 1/2. Its function is as follows. Catalyzes the transfer of a phosphate group to glutamate to form L-glutamate 5-phosphate. This Meiothermus ruber protein is Glutamate 5-kinase.